The sequence spans 279 residues: Cytochrome c1 (279 aa).

Positions Met-1–Ala-21 are cleaved as a signal peptide. 4 residues coordinate heme c: Cys-55, Cys-58, His-59, and Met-204. Residues Met-248 to Thr-266 traverse the membrane as a helical segment.

In terms of assembly, the main subunits of complex b-c1 are: cytochrome b, cytochrome c1 and the Rieske protein. Binds 1 heme c group covalently per subunit.

It is found in the cell membrane. In terms of biological role, component of the ubiquinol-cytochrome c reductase complex (complex III or cytochrome b-c1 complex), which is a respiratory chain that generates an electrochemical potential coupled to ATP synthesis. c1 functions as an electron donor to cytochrome c. The protein is Cytochrome c1 (petC) of Rhodobacter capsulatus (strain ATCC BAA-309 / NBRC 16581 / SB1003).